The following is a 293-amino-acid chain: MMRIALFLLTNLAVMVVFGLVLSLTGIQSSSVQGLLIMALLFGFGGSFISLLMSKWMALKSVGGEVIEQPRNERERWLMNTVATQARQAGIAMPQVAIYHAPDINAFATGARRDASLVAVSTGLLQNMSPDEAEAVIAHEISHIANGDMVTMTLIQGVVNTFVIFISRIIAQIAAGFLGGNRDEGEGSNGNPLIYFAVATVLELVFGILASIITMWFSRYREFHADAGSAKLVGREKMIAALQRLKTSYEPQEATSMMAFCINGKSKSLSELFMTHPPLDKRIEALRSGEYLK.

A run of 2 helical transmembrane segments spans residues 4 to 24 (IALF…VLSL) and 34 to 54 (GLLI…LLMS). His-139 serves as a coordination point for Zn(2+). Glu-140 is a catalytic residue. Position 143 (His-143) interacts with Zn(2+). A run of 2 helical transmembrane segments spans residues 158–178 (VVNT…AGFL) and 193–213 (LIYF…ASII). Glu-222 serves as a coordination point for Zn(2+).

It belongs to the peptidase M48B family. The cofactor is Zn(2+).

The protein localises to the cell inner membrane. The sequence is that of Protease HtpX from Salmonella agona (strain SL483).